Consider the following 734-residue polypeptide: Photosystem I P700 chlorophyll a apoprotein A2 (734 aa).

The next 8 membrane-spanning stretches (helical) occupy residues 46–69, 135–158, 175–199, 273–291, 330–353, 369–395, 417–439, and 517–535; these read IFASHFGQLAIIFLWTSGNLFHVA, LYTGALFLLFLSALSLIGGWLHLQ, LNHHLSGLFGVSSLAWTGHLVHVAI, MAHHHLAIAILFLIAGHMY, IHFQLGLALASLGVITSLVAQHMY, AALYTHHQYIAGFIMTGAFAHGAIFFI, AIISHLSWASLFLGFHTLGLYVH, and FLVHHAIALGLHTTTLILV. Cys559 and Cys568 together coordinate [4Fe-4S] cluster. A run of 2 helical transmembrane segments spans residues 575 to 596 and 643 to 665; these read AFYLAVFWMLNTIGWVTFYWHW and LSVWAWMFLFGHLVWATGFMFLI. Residues His654, Met662, and Tyr670 each coordinate chlorophyll a. Trp671 lines the phylloquinone pocket. The chain crosses the membrane as a helical span at residues 707–727; the sequence is LVGLAHFSVGYIFTYAAFLIA.

Belongs to the PsaA/PsaB family. The PsaA/B heterodimer binds the P700 chlorophyll special pair and subsequent electron acceptors. PSI consists of a core antenna complex that captures photons, and an electron transfer chain that converts photonic excitation into a charge separation. The eukaryotic PSI reaction center is composed of at least 11 subunits. It depends on P700 is a chlorophyll a/chlorophyll a' dimer, A0 is one or more chlorophyll a, A1 is one or both phylloquinones and FX is a shared 4Fe-4S iron-sulfur center. as a cofactor.

It is found in the plastid. The protein localises to the chloroplast thylakoid membrane. It catalyses the reaction reduced [plastocyanin] + hnu + oxidized [2Fe-2S]-[ferredoxin] = oxidized [plastocyanin] + reduced [2Fe-2S]-[ferredoxin]. Functionally, psaA and PsaB bind P700, the primary electron donor of photosystem I (PSI), as well as the electron acceptors A0, A1 and FX. PSI is a plastocyanin-ferredoxin oxidoreductase, converting photonic excitation into a charge separation, which transfers an electron from the donor P700 chlorophyll pair to the spectroscopically characterized acceptors A0, A1, FX, FA and FB in turn. Oxidized P700 is reduced on the lumenal side of the thylakoid membrane by plastocyanin. In Arabidopsis thaliana (Mouse-ear cress), this protein is Photosystem I P700 chlorophyll a apoprotein A2.